Reading from the N-terminus, the 504-residue chain is Arrestin-related trafficking adapter 10 (504 aa).

It belongs to the ART10 family.

It localises to the cytoplasm. Its function is as follows. May regulate endocytosis by recruiting RSP5 ubiquitin ligase activity to specific plasma membrane proteins in response to extracellular stimuli. The polypeptide is Arrestin-related trafficking adapter 10 (ART10) (Candida glabrata (strain ATCC 2001 / BCRC 20586 / JCM 3761 / NBRC 0622 / NRRL Y-65 / CBS 138) (Yeast)).